A 314-amino-acid chain; its full sequence is Putative S-adenosyl-L-methionine-dependent methyltransferase MAB_3886c (314 aa).

S-adenosyl-L-methionine contacts are provided by residues D133 and 162-163 (DL).

This sequence belongs to the UPF0677 family.

In terms of biological role, exhibits S-adenosyl-L-methionine-dependent methyltransferase activity. This chain is Putative S-adenosyl-L-methionine-dependent methyltransferase MAB_3886c, found in Mycobacteroides abscessus (strain ATCC 19977 / DSM 44196 / CCUG 20993 / CIP 104536 / JCM 13569 / NCTC 13031 / TMC 1543 / L948) (Mycobacterium abscessus).